Reading from the N-terminus, the 108-residue chain is Ig kappa chain V-V region HP 93G7 (108 aa).

A framework-1 region spans residues 1–23 (DIQMTQTTSSLSASLGDRVTISC). Cysteines 23 and 88 form a disulfide. The complementarity-determining-1 stretch occupies residues 24 to 34 (RASQDISNYLN). The tract at residues 35–49 (WYQQKPDGTVKLLIY) is framework-2. Positions 50–56 (YTSRLHS) are complementarity-determining-2. The framework-3 stretch occupies residues 57–88 (GVPSRFSGSGSGTDYSLTISNLEQEDIATYFC). Residues 89–97 (QQGNMLPRT) are complementarity-determining-3. The framework-4 stretch occupies residues 98-108 (FGGGTKLEIKR).

This is Ig kappa chain V-V region HP 93G7 from Mus musculus (Mouse).